A 122-amino-acid chain; its full sequence is Large ribosomal subunit protein uL14 (122 aa).

It belongs to the universal ribosomal protein uL14 family. In terms of assembly, part of the 50S ribosomal subunit. Forms a cluster with proteins L3 and L19. In the 70S ribosome, L14 and L19 interact and together make contacts with the 16S rRNA in bridges B5 and B8.

Binds to 23S rRNA. Forms part of two intersubunit bridges in the 70S ribosome. The protein is Large ribosomal subunit protein uL14 of Symbiobacterium thermophilum (strain DSM 24528 / JCM 14929 / IAM 14863 / T).